The primary structure comprises 280 residues: Phosphonates import ATP-binding protein PhnC 1 (280 aa).

The ABC transporter domain maps to 2–246 (LRIENLDKRY…VLTRIYGEED (245 aa)). Residue 35–42 (GPSGAGKS) participates in ATP binding. The segment at 247–266 (WSKTSDEDADSVDAPPRAAD) is disordered.

The protein belongs to the ABC transporter superfamily. Phosphonates importer (TC 3.A.1.9.1) family. As to quaternary structure, the complex is composed of two ATP-binding proteins (PhnC), two transmembrane proteins (PhnE) and a solute-binding protein (PhnD).

The protein localises to the cell inner membrane. The catalysed reaction is phosphonate(out) + ATP + H2O = phosphonate(in) + ADP + phosphate + H(+). In terms of biological role, part of the ABC transporter complex PhnCDE involved in phosphonates import. Responsible for energy coupling to the transport system. The protein is Phosphonates import ATP-binding protein PhnC 1 of Rhodopseudomonas palustris (strain HaA2).